The chain runs to 89 residues: Small ribosomal subunit protein uS15 (89 aa).

Residues 1–25 form a disordered region; that stretch reads MSLDTTEKQQLINTHQTHGTDTGSA. Positions 8–25 are enriched in polar residues; the sequence is KQQLINTHQTHGTDTGSA.

The protein belongs to the universal ribosomal protein uS15 family. In terms of assembly, part of the 30S ribosomal subunit. Forms a bridge to the 50S subunit in the 70S ribosome, contacting the 23S rRNA.

In terms of biological role, one of the primary rRNA binding proteins, it binds directly to 16S rRNA where it helps nucleate assembly of the platform of the 30S subunit by binding and bridging several RNA helices of the 16S rRNA. Forms an intersubunit bridge (bridge B4) with the 23S rRNA of the 50S subunit in the ribosome. This chain is Small ribosomal subunit protein uS15, found in Synechococcus sp. (strain CC9902).